A 304-amino-acid chain; its full sequence is Acetyl-coenzyme A carboxylase carboxyl transferase subunit beta (304 aa).

The 270-residue stretch at 23–292 (VWTKCDSCGQ…PNPEAPREGV (270 aa)) folds into the CoA carboxyltransferase N-terminal domain. The Zn(2+) site is built by Cys27, Cys30, Cys46, and Cys49. A C4-type zinc finger spans residues 27-49 (CDSCGQVLYRAELERNLEVCPKC). Positions 284–304 (NPEAPREGVVVPPVPDQEPEA) are disordered. Pro residues predominate over residues 295–304 (PPVPDQEPEA).

It belongs to the AccD/PCCB family. Acetyl-CoA carboxylase is a heterohexamer composed of biotin carboxyl carrier protein (AccB), biotin carboxylase (AccC) and two subunits each of ACCase subunit alpha (AccA) and ACCase subunit beta (AccD). It depends on Zn(2+) as a cofactor.

The protein resides in the cytoplasm. It catalyses the reaction N(6)-carboxybiotinyl-L-lysyl-[protein] + acetyl-CoA = N(6)-biotinyl-L-lysyl-[protein] + malonyl-CoA. It participates in lipid metabolism; malonyl-CoA biosynthesis; malonyl-CoA from acetyl-CoA: step 1/1. In terms of biological role, component of the acetyl coenzyme A carboxylase (ACC) complex. Biotin carboxylase (BC) catalyzes the carboxylation of biotin on its carrier protein (BCCP) and then the CO(2) group is transferred by the transcarboxylase to acetyl-CoA to form malonyl-CoA. This is Acetyl-coenzyme A carboxylase carboxyl transferase subunit beta from Shigella boydii serotype 4 (strain Sb227).